Reading from the N-terminus, the 208-residue chain is Truncated thymidylate kinase (208 aa).

It belongs to the thymidylate kinase family.

Its function is as follows. Catalyzes the conversion of dTMP to dTDP. The sequence is that of Truncated thymidylate kinase (TMK) from Ornithodoros (relapsing fever ticks).